The following is a 647-amino-acid chain: DNA topoisomerase 3 (647 aa).

Residues 2–135 (TRLFIAEKPS…KKETVQRLLI (134 aa)) form the Toprim domain. The Mg(2+) site is built by glutamate 8, aspartate 104, and aspartate 106. Residues 156–608 (FIPLSVSALA…TLQGRLEQLI (453 aa)) enclose the Topo IA-type catalytic domain. An interaction with DNA region spans residues 195 to 200 (SVGRVQ). Tyrosine 332 serves as the catalytic O-(5'-phospho-DNA)-tyrosine intermediate.

It belongs to the type IA topoisomerase family. Requires Mg(2+) as cofactor.

The catalysed reaction is ATP-independent breakage of single-stranded DNA, followed by passage and rejoining.. Functionally, releases the supercoiling and torsional tension of DNA, which is introduced during the DNA replication and transcription, by transiently cleaving and rejoining one strand of the DNA duplex. Introduces a single-strand break via transesterification at a target site in duplex DNA. The scissile phosphodiester is attacked by the catalytic tyrosine of the enzyme, resulting in the formation of a DNA-(5'-phosphotyrosyl)-enzyme intermediate and the expulsion of a 3'-OH DNA strand. The free DNA strand then undergoes passage around the unbroken strand, thus removing DNA supercoils. Finally, in the religation step, the DNA 3'-OH attacks the covalent intermediate to expel the active-site tyrosine and restore the DNA phosphodiester backbone. In Vibrio cholerae serotype O1 (strain ATCC 39315 / El Tor Inaba N16961), this protein is DNA topoisomerase 3.